A 117-amino-acid polypeptide reads, in one-letter code: Large ribosomal subunit protein uL18 (117 aa).

This sequence belongs to the universal ribosomal protein uL18 family. As to quaternary structure, part of the 50S ribosomal subunit; part of the 5S rRNA/L5/L18/L25 subcomplex. Contacts the 5S and 23S rRNAs.

Functionally, this is one of the proteins that bind and probably mediate the attachment of the 5S RNA into the large ribosomal subunit, where it forms part of the central protuberance. The chain is Large ribosomal subunit protein uL18 from Aliivibrio fischeri (strain MJ11) (Vibrio fischeri).